We begin with the raw amino-acid sequence, 439 residues long: Glutamate-1-semialdehyde 2,1-aminomutase (439 aa).

Position 270 is an N6-(pyridoxal phosphate)lysine (lysine 270).

Belongs to the class-III pyridoxal-phosphate-dependent aminotransferase family. HemL subfamily. As to quaternary structure, homodimer. It depends on pyridoxal 5'-phosphate as a cofactor.

It is found in the cytoplasm. It carries out the reaction (S)-4-amino-5-oxopentanoate = 5-aminolevulinate. The protein operates within porphyrin-containing compound metabolism; protoporphyrin-IX biosynthesis; 5-aminolevulinate from L-glutamyl-tRNA(Glu): step 2/2. The sequence is that of Glutamate-1-semialdehyde 2,1-aminomutase from Kocuria rhizophila (strain ATCC 9341 / DSM 348 / NBRC 103217 / DC2201).